Consider the following 116-residue polypeptide: Iron-sulfur cluster insertion protein ErpA (116 aa).

Residues Cys-44, Cys-108, and Cys-110 each coordinate iron-sulfur cluster.

This sequence belongs to the HesB/IscA family. Homodimer. Requires iron-sulfur cluster as cofactor.

Required for insertion of 4Fe-4S clusters for at least IspG. This Shewanella putrefaciens (strain CN-32 / ATCC BAA-453) protein is Iron-sulfur cluster insertion protein ErpA.